The following is a 728-amino-acid chain: Propionyl-CoA carboxylase alpha chain, mitochondrial (728 aa).

Residues 1–52 (MAGFWVGTAPLVAAGRRGRWPPQQLMLSAALRTLKHVLYYSRQCLMVSRNLG) constitute a mitochondrion transit peptide. A Biotin carboxylation domain is found at 62-509 (TFDKILVANR…STKFLSDVYP (448 aa)). At Lys65 the chain carries N6-acetyllysine; alternate. An N6-succinyllysine; alternate modification is found at Lys65. Lys119 is subject to N6-succinyllysine. Lys150 is modified (N6-acetyllysine; alternate). Position 150 is an N6-succinyllysine; alternate (Lys150). Position 177 (Lys177) interacts with ATP. The ATP-grasp domain maps to 181-378 (KLLAKKAEVN…LVQEMIRVAK (198 aa)). Residue Lys200 is modified to N6-acetyllysine; alternate. Lys200 is modified (N6-succinyllysine; alternate). Residues 209 to 270 (AREI…PRHI), Glu261, and Asn296 contribute to the ATP site. At Ser252 the chain carries Phosphoserine. The residue at position 262 (Lys262) is an N6-succinyllysine. Lys328 is subject to N6-acetyllysine; alternate. Lys328 is subject to N6-succinyllysine; alternate. Positions 336, 349, and 351 each coordinate Mg(2+). Mn(2+)-binding residues include Glu336, Glu349, and Asn351. Glu349 is a catalytic residue. An N6-succinyllysine mark is found at Lys385 and Lys407. Biotin is bound at residue Phe409. N6-acetyllysine is present on Lys496. N6-succinyllysine occurs at positions 502, 513, and 648. The 76-residue stretch at 653–728 (KVTEDTSSVL…GEGDLLVELE (76 aa)) folds into the Biotinyl-binding domain. At Lys694 the chain carries N6-biotinyllysine; by HLCS.

In terms of assembly, the holoenzyme is a dodecamer composed of 6 PCCA/alpha subunits and 6 PCCB/beta subunits. Interacts (via the biotin carboxylation domain) with SIRT4. Interacts with SIRT3 and SIRT5. Mg(2+) serves as cofactor. Mn(2+) is required as a cofactor. Requires biotin as cofactor. Acetylated. Post-translationally, the biotin cofactor is covalently attached to the C-terminal biotinyl-binding domain and is required for the catalytic activity. Biotinylation is catalyzed by HLCS.

Its subcellular location is the mitochondrion matrix. It catalyses the reaction propanoyl-CoA + hydrogencarbonate + ATP = (S)-methylmalonyl-CoA + ADP + phosphate + H(+). The catalysed reaction is butanoyl-CoA + hydrogencarbonate + ATP = (2S)-ethylmalonyl-CoA + ADP + phosphate + H(+). Its pathway is metabolic intermediate metabolism; propanoyl-CoA degradation; succinyl-CoA from propanoyl-CoA: step 1/3. Its function is as follows. This is one of the 2 subunits of the biotin-dependent propionyl-CoA carboxylase (PCC), a mitochondrial enzyme involved in the catabolism of odd chain fatty acids, branched-chain amino acids isoleucine, threonine, methionine, and valine and other metabolites. Propionyl-CoA carboxylase catalyzes the carboxylation of propionyl-CoA/propanoyl-CoA to D-methylmalonyl-CoA/(S)-methylmalonyl-CoA. Within the holoenzyme, the alpha subunit catalyzes the ATP-dependent carboxylation of the biotin carried by the biotin carboxyl carrier (BCC) domain, while the beta subunit then transfers the carboxyl group from carboxylated biotin to propionyl-CoA. Propionyl-CoA carboxylase also significantly acts on butyryl-CoA/butanoyl-CoA, which is converted to ethylmalonyl-CoA/(2S)-ethylmalonyl-CoA at a much lower rate. Other alternative minor substrates include (2E)-butenoyl-CoA/crotonoyl-CoA. The polypeptide is Propionyl-CoA carboxylase alpha chain, mitochondrial (Homo sapiens (Human)).